The chain runs to 58 residues: Large ribosomal subunit protein uL30 (58 aa).

Belongs to the universal ribosomal protein uL30 family. In terms of assembly, part of the 50S ribosomal subunit.

This chain is Large ribosomal subunit protein uL30, found in Blochmanniella floridana.